A 252-amino-acid chain; its full sequence is NAD(P)H-quinone oxidoreductase subunit K (252 aa).

[4Fe-4S] cluster is bound by residues Cys73, Cys74, Cys138, and Cys169. The span at 225–236 (ASTQKQALSPSQ) shows a compositional bias: polar residues. Residues 225–252 (ASTQKQALSPSQEIPLEDQNEATKEIAQ) form a disordered region.

Belongs to the complex I 20 kDa subunit family. In terms of assembly, NDH-1 can be composed of about 15 different subunits; different subcomplexes with different compositions have been identified which probably have different functions. [4Fe-4S] cluster serves as cofactor.

The protein localises to the cellular thylakoid membrane. The enzyme catalyses a plastoquinone + NADH + (n+1) H(+)(in) = a plastoquinol + NAD(+) + n H(+)(out). It catalyses the reaction a plastoquinone + NADPH + (n+1) H(+)(in) = a plastoquinol + NADP(+) + n H(+)(out). In terms of biological role, NDH-1 shuttles electrons from an unknown electron donor, via FMN and iron-sulfur (Fe-S) centers, to quinones in the respiratory and/or the photosynthetic chain. The immediate electron acceptor for the enzyme in this species is believed to be plastoquinone. Couples the redox reaction to proton translocation, and thus conserves the redox energy in a proton gradient. Cyanobacterial NDH-1 also plays a role in inorganic carbon-concentration. This Prochlorococcus marinus (strain MIT 9211) protein is NAD(P)H-quinone oxidoreductase subunit K.